We begin with the raw amino-acid sequence, 302 residues long: N-acetylmuramic acid 6-phosphate etherase (302 aa).

One can recognise an SIS domain in the interval 57 to 220 (IADRFRSNGR…TTGAMIRIGK (164 aa)). Catalysis depends on Glu-85, which acts as the Proton donor. Glu-116 is an active-site residue.

Belongs to the GCKR-like family. MurNAc-6-P etherase subfamily. In terms of assembly, homodimer.

The catalysed reaction is N-acetyl-D-muramate 6-phosphate + H2O = N-acetyl-D-glucosamine 6-phosphate + (R)-lactate. It participates in amino-sugar metabolism; N-acetylmuramate degradation. In terms of biological role, specifically catalyzes the cleavage of the D-lactyl ether substituent of MurNAc 6-phosphate, producing GlcNAc 6-phosphate and D-lactate. The polypeptide is N-acetylmuramic acid 6-phosphate etherase (Rhodopirellula baltica (strain DSM 10527 / NCIMB 13988 / SH1)).